Here is a 716-residue protein sequence, read N- to C-terminus: Epidermal growth factor receptor kinase substrate 8-like protein 2 (716 aa).

Disordered regions lie at residues 1-25 and 182-243; these read MSQS…DGVA and PQTL…SQEE. A PID domain is found at 46–202; the sequence is MHETSQYHVQ…RQRQSILPPP (157 aa). Pro residues predominate over residues 199–208; the sequence is LPPPQGPAPI. Residues 234–243 are compositionally biased toward basic and acidic residues; sequence GFRRRESQEE. S240 is modified (phosphoserine). T304 is modified (phosphothreonine). Positions 449 to 488 are disordered; it reads VSPVSRQSIRNSQKHSPTSEPTPPGDALPPVSSPHTHRGY. A Phosphoserine modification is found at S450. Polar residues predominate over residues 452–467; that stretch reads VSRQSIRNSQKHSPTS. T470 is modified (phosphothreonine). The SH3 domain occupies 493-552; the sequence is AMAKYVKILYDFTARNANELSVLKDEVLEVLEDGRQWWKLRSRSGQAGYVPCNILGEARP. Residue S571 is modified to Phosphoserine.

This sequence belongs to the EPS8 family. Interacts with ABI1. Part of a complex that contains SOS1, ABI1 and EPS8L2. Associates with F-actin.

The protein resides in the cytoplasm. Its subcellular location is the cell projection. It is found in the stereocilium. Functionally, stimulates guanine exchange activity of SOS1. May play a role in membrane ruffling and remodeling of the actin cytoskeleton. In the cochlea, is required for stereocilia maintenance in adult hair cells. The sequence is that of Epidermal growth factor receptor kinase substrate 8-like protein 2 (EPS8L2) from Pongo abelii (Sumatran orangutan).